The sequence spans 122 residues: Small ribosomal subunit protein bS16 (122 aa).

Residues 87 to 122 form a disordered region; sequence AQSNPKKALPKKKAQERAAASAAAAEKAAAAAAPEA. Residues 103–122 are compositionally biased toward low complexity; it reads RAAASAAAAEKAAAAAAPEA.

Belongs to the bacterial ribosomal protein bS16 family.

The polypeptide is Small ribosomal subunit protein bS16 (Methylocella silvestris (strain DSM 15510 / CIP 108128 / LMG 27833 / NCIMB 13906 / BL2)).